We begin with the raw amino-acid sequence, 321 residues long: MTVITIAKRGLPKLTTSTSSTTTASSSSTITSVVSSSSSSSSLPLLSNSTSSSIIPSITPPSRNGNPYILDSGDMPNGTVFIIVGGIAGVIFLAILLWWVITTYSSHRLTRSVQDYESKMFSAQHTQFYGDSPYMDYPAKENFQDQVHISESDISPGNKDESVKDALVSHTNNEKPFLSNFERPLSSLVSESNRNSLFISPTGDILNKTRLSKLYQESPRLLQKPVIMTSDNVSTNSLVSTISSSSASSLDNGNEKEVGEDIRKPAKIASSPSRKLLNSPESDGSVNRNHSKGNLLVVQSKRKPTPSTYLEHMLEGKEQDE.

Positions 35-59 (SSSSSSSSLPLLSNSTSSSIIPSIT) are disordered. The helical transmembrane segment at 81–101 (FIIVGGIAGVIFLAILLWWVI) threads the bilayer. The residue at position 132 (S132) is a Phosphoserine. Residues 241 to 250 (TISSSSASSL) show a composition bias toward low complexity. The interval 241–321 (TISSSSASSL…HMLEGKEQDE (81 aa)) is disordered. Basic and acidic residues predominate over residues 253 to 264 (GNEKEVGEDIRK). Over residues 279–288 (SPESDGSVNR) the composition is skewed to polar residues. S282, S285, and S291 each carry phosphoserine. Basic and acidic residues predominate over residues 312–321 (HMLEGKEQDE). K317 participates in a covalent cross-link: Glycyl lysine isopeptide (Lys-Gly) (interchain with G-Cter in ubiquitin).

It belongs to the PRM5 family.

Its subcellular location is the membrane. The polypeptide is Pheromone-regulated membrane protein 5 (PRM5) (Saccharomyces cerevisiae (strain YJM789) (Baker's yeast)).